Reading from the N-terminus, the 242-residue chain is High mobility group protein homolog (242 aa).

2 DNA-binding regions (HMG box) span residues 54 to 122 and 126 to 197; these read PKRN…EANK and KPVK…IDKE.

The protein localises to the host nucleus. The chain is High mobility group protein homolog (EF1) from Acheta domesticus (House cricket).